The sequence spans 308 residues: Ornithine carbamoyltransferase (308 aa).

Carbamoyl phosphate is bound by residues 56-59 (STRT), Q83, R107, and 134-137 (HPCQ). L-ornithine contacts are provided by residues N165, D225, and 229–230 (SM). Residues 266–267 (CL) and R294 contribute to the carbamoyl phosphate site.

Belongs to the aspartate/ornithine carbamoyltransferase superfamily. OTCase family.

It localises to the cytoplasm. The enzyme catalyses carbamoyl phosphate + L-ornithine = L-citrulline + phosphate + H(+). Its pathway is amino-acid degradation; L-arginine degradation via ADI pathway; carbamoyl phosphate from L-arginine: step 2/2. In terms of biological role, reversibly catalyzes the transfer of the carbamoyl group from carbamoyl phosphate (CP) to the N(epsilon) atom of ornithine (ORN) to produce L-citrulline. This Cereibacter sphaeroides (strain KD131 / KCTC 12085) (Rhodobacter sphaeroides) protein is Ornithine carbamoyltransferase.